The following is a 260-amino-acid chain: uncharacterized protein (260 aa).

The first 22 residues, 1 to 22 (MGYLKRFALYISILVLIVMVAG), serve as a signal peptide directing secretion. The N-palmitoyl cysteine moiety is linked to residue cysteine 23. A lipid anchor (S-diacylglycerol cysteine) is attached at cysteine 23.

Belongs to the staphylococcal tandem lipoprotein family.

It is found in the cell membrane. This is an uncharacterized protein from Staphylococcus aureus (strain bovine RF122 / ET3-1).